The sequence spans 482 residues: G2/mitotic-specific cyclin cdc13 (482 aa).

Composition is skewed to polar residues over residues 35-55 (LHSSENSLVNGKKATVSSTNV), 78-92 (SKNTNVRHTTASVST), and 118-140 (SVFNSSVPSLPQHLSTKSHSVST). The disordered stretch occupies residues 35–140 (LHSSENSLVN…LSTKSHSVST (106 aa)). Positions 206 to 332 (DIFEYLNELE…ILRVLEFNLA (127 aa)) constitute a Cyclin N-terminal domain.

The protein belongs to the cyclin family. Cyclin AB subfamily. As to quaternary structure, interacts with cdc2. Interacts with rum1. Associates with microtubules. Also interacts with cdc11.

The protein localises to the nucleus. It localises to the cytoplasm. Its subcellular location is the cytoskeleton. It is found in the microtubule organizing center. The protein resides in the spindle pole body. Its function is as follows. Essential for the control of the cell cycle at the G2/M (mitosis) transition. Interacts with the cdc2 protein kinase to form MPF. G2/M cyclins accumulate steadily during G2 and are abruptly destroyed at mitosis. Involved in the reorganization of the cytoskeleton on transition from G2 to mitosis. Association with rum1 promotes its proteolysis during G1. Also essential for initiation of meiosis II. The chain is G2/mitotic-specific cyclin cdc13 from Schizosaccharomyces pombe (strain 972 / ATCC 24843) (Fission yeast).